Consider the following 85-residue polypeptide: Small ribosomal subunit protein uS17 (85 aa).

Belongs to the universal ribosomal protein uS17 family. In terms of assembly, part of the 30S ribosomal subunit.

Functionally, one of the primary rRNA binding proteins, it binds specifically to the 5'-end of 16S ribosomal RNA. The chain is Small ribosomal subunit protein uS17 from Desulforudis audaxviator (strain MP104C).